The following is a 260-amino-acid chain: Small ribosomal subunit protein eS1 (260 aa).

Ala2 is modified (N-acetylalanine; partial).

It belongs to the eukaryotic ribosomal protein eS1 family. As to quaternary structure, component of the small ribosomal subunit. Mature ribosomes consist of a small (40S) and a large (60S) subunit. The 40S subunit contains about 33 different proteins and 1 molecule of RNA (18S). The 60S subunit contains about 49 different proteins and 3 molecules of RNA (25S, 5.8S and 5S).

Its subcellular location is the cytoplasm. In Mycosarcoma maydis (Corn smut fungus), this protein is Small ribosomal subunit protein eS1.